The following is a 581-amino-acid chain: NADH-quinone oxidoreductase subunit C/D (581 aa).

Residues 1 to 172 form an NADH dehydrogenase I subunit C region; that stretch reads MSASELVTEL…PLFNMTASLF (172 aa). The tract at residues 196-581 is NADH dehydrogenase I subunit D; it reads ELMILNYGPH…IDYVMSDVDR (386 aa).

It in the N-terminal section; belongs to the complex I 30 kDa subunit family. The protein in the C-terminal section; belongs to the complex I 49 kDa subunit family. In terms of assembly, NDH-1 is composed of 13 different subunits. Subunits NuoB, CD, E, F, and G constitute the peripheral sector of the complex.

It is found in the cell inner membrane. It carries out the reaction a quinone + NADH + 5 H(+)(in) = a quinol + NAD(+) + 4 H(+)(out). NDH-1 shuttles electrons from NADH, via FMN and iron-sulfur (Fe-S) centers, to quinones in the respiratory chain. The immediate electron acceptor for the enzyme in this species is believed to be ubiquinone. Couples the redox reaction to proton translocation (for every two electrons transferred, four hydrogen ions are translocated across the cytoplasmic membrane), and thus conserves the redox energy in a proton gradient. The polypeptide is NADH-quinone oxidoreductase subunit C/D (Rhodopseudomonas palustris (strain TIE-1)).